Reading from the N-terminus, the 411-residue chain is uncharacterized protein (411 aa).

This sequence belongs to the peptidase M20 family.

This is an uncharacterized protein from Haemophilus influenzae (strain ATCC 51907 / DSM 11121 / KW20 / Rd).